The primary structure comprises 211 residues: C-type lectin domain-containing protein 158 (211 aa).

Residues 1–16 (MQKFILSAFVVALVAA) form the signal peptide.

This is C-type lectin domain-containing protein 158 (clec-158) from Caenorhabditis elegans.